The following is a 371-amino-acid chain: Probable G protein-coupled receptor 85 (371 aa).

Over 1 to 26 (MANYSHAGDHNILQNVSPLATFLKLT) the chain is Extracellular. The N-linked (GlcNAc...) asparagine glycan is linked to Asn3. A helical membrane pass occupies residues 27-47 (SLGFIIGVGVVGNLLISILLV). Topologically, residues 48–58 (KDKSLHRAPYY) are cytoplasmic. Residues 59–79 (FLLDLCASDILRSAICFPFVF) form a helical membrane-spanning segment. Residues 80–96 (TSVKNGSAWTYGTLTCK) lie on the Extracellular side of the membrane. An N-linked (GlcNAc...) asparagine glycan is attached at Asn84. Cys95 and Cys173 are disulfide-bonded. The helical transmembrane segment at 97 to 117 (VIAFLGVLSCFHTAFMLFCVS) threads the bilayer. Residues 118-138 (VTRYLAIAHHRFYTKRLTFWT) lie on the Cytoplasmic side of the membrane. Residues 139-159 (CLAVICMVWTLSVAMAFPPVL) form a helical membrane-spanning segment. Over 160 to 189 (DVGTYSFIREEDQCTFQHRSFRANDSLGFM) the chain is Extracellular. N-linked (GlcNAc...) asparagine glycosylation is present at Asn183. A helical transmembrane segment spans residues 190–210 (LLLALILLATQLVYLKLIFFV). The Cytoplasmic segment spans residues 211–287 (HDRRKMKPVQ…FKTEKRISRM (77 aa)). A helical transmembrane segment spans residues 288-308 (FYIITFFFLSLWGPYLVACYW). Over 309-321 (RVFARGPVIPGGY) the chain is Extracellular. The helical transmembrane segment at 322–342 (LTAAVWMSFAQAGVNPFICIF) threads the bilayer. Residues 343 to 371 (SNRELRRCFSTTLLYCRKSRLPREPYCVI) lie on the Cytoplasmic side of the membrane.

It belongs to the G-protein coupled receptor 1 family.

It is found in the cell membrane. Functionally, orphan receptor. The protein is Probable G protein-coupled receptor 85 (gpr85) of Danio rerio (Zebrafish).